The sequence spans 113 residues: Integration host factor subunit alpha (113 aa).

Residues 59–80 (GNFQVRDKPPRPGRNPKTGETI) form a disordered region.

The protein belongs to the bacterial histone-like protein family. Heterodimer of an alpha and a beta chain.

In terms of biological role, this protein is one of the two subunits of integration host factor, a specific DNA-binding protein that functions in genetic recombination as well as in transcriptional and translational control. The chain is Integration host factor subunit alpha from Bordetella bronchiseptica (strain ATCC BAA-588 / NCTC 13252 / RB50) (Alcaligenes bronchisepticus).